A 145-amino-acid chain; its full sequence is Putative pre-16S rRNA nuclease (145 aa).

It belongs to the YqgF nuclease family.

It is found in the cytoplasm. Functionally, could be a nuclease involved in processing of the 5'-end of pre-16S rRNA. The sequence is that of Putative pre-16S rRNA nuclease from Pseudomonas fluorescens.